We begin with the raw amino-acid sequence, 512 residues long: ATP synthase subunit alpha, chloroplastic (512 aa).

Residue 170 to 177 (GDRQTGKT) participates in ATP binding.

This sequence belongs to the ATPase alpha/beta chains family. As to quaternary structure, F-type ATPases have 2 components, CF(1) - the catalytic core - and CF(0) - the membrane proton channel. CF(1) has five subunits: alpha(3), beta(3), gamma(1), delta(1), epsilon(1). CF(0) has four main subunits: a, b, b' and c.

The protein resides in the plastid. It localises to the chloroplast thylakoid membrane. The catalysed reaction is ATP + H2O + 4 H(+)(in) = ADP + phosphate + 5 H(+)(out). Produces ATP from ADP in the presence of a proton gradient across the membrane. The alpha chain is a regulatory subunit. The protein is ATP synthase subunit alpha, chloroplastic of Staurastrum punctulatum (Green alga).